The sequence spans 324 residues: tRNA uridine(34) hydroxylase (324 aa).

A Rhodanese domain is found at 127 to 221 (QQEETIVIDA…YGKDPEVQGE (95 aa)). Residue Cys-181 is the Cysteine persulfide intermediate of the active site.

It belongs to the TrhO family.

The enzyme catalyses uridine(34) in tRNA + AH2 + O2 = 5-hydroxyuridine(34) in tRNA + A + H2O. Catalyzes oxygen-dependent 5-hydroxyuridine (ho5U) modification at position 34 in tRNAs. The protein is tRNA uridine(34) hydroxylase of Bacillus cytotoxicus (strain DSM 22905 / CIP 110041 / 391-98 / NVH 391-98).